The sequence spans 164 residues: Probable ribosome biogenesis protein RLP24 (164 aa).

The protein belongs to the eukaryotic ribosomal protein eL24 family. Associated with nucleolar and cytoplasmic pre-60S particles. At the end of biogenesis it dissociates from cytoplasmic pre-60S particles and is likely to be exchanged for its ribosomal homolog, RPL24.

It is found in the cytoplasm. The protein localises to the nucleus. Involved in the biogenesis of the 60S ribosomal subunit. Ensures the docking of nog1 to pre-60S particles. Activates and recruits ATPase AFG2 to cytoplasmic pre-60S ribosomal particles. The sequence is that of Probable ribosome biogenesis protein RLP24 (rlp24) from Dictyostelium discoideum (Social amoeba).